Reading from the N-terminus, the 257-residue chain is Adenylate kinase (257 aa).

Position 52–57 (52–57) interacts with ATP; that stretch reads GAGKGT. The NMP stretch occupies residues 72–101; it reads ATGDMLRSQVAKKTELGKEAKKIMDQGGLV. Residues threonine 73, arginine 78, 99 to 101, 128 to 131, and glutamine 135 each bind AMP; these read GLV and GFPR. The LID stretch occupies residues 169–206; sequence GRLVHPASGRSYHKIFNPPKNEMLDDITGEPLIQRSDD. Residues arginine 170 and 179-180 each bind ATP; that span reads SY. Positions 203 and 214 each coordinate AMP. Glutamine 242 is a binding site for ATP.

Belongs to the adenylate kinase family. AK2 subfamily. In terms of assembly, monomer.

It is found in the cytoplasm. The protein resides in the cytosol. Its subcellular location is the mitochondrion intermembrane space. It carries out the reaction AMP + ATP = 2 ADP. Its function is as follows. Catalyzes the reversible transfer of the terminal phosphate group between ATP and AMP. Plays an important role in cellular energy homeostasis and in adenine nucleotide metabolism. Adenylate kinase activity is critical for regulation of the phosphate utilization and the AMP de novo biosynthesis pathways. The polypeptide is Adenylate kinase (adk1) (Aspergillus clavatus (strain ATCC 1007 / CBS 513.65 / DSM 816 / NCTC 3887 / NRRL 1 / QM 1276 / 107)).